A 58-amino-acid polypeptide reads, in one-letter code: Keratin-associated protein 21-3 (58 aa).

As to quaternary structure, interacts with hair keratins.

In the hair cortex, hair keratin intermediate filaments are embedded in an interfilamentous matrix, consisting of hair keratin-associated proteins (KRTAP), which are essential for the formation of a rigid and resistant hair shaft through their extensive disulfide bond cross-linking with abundant cysteine residues of hair keratins. The matrix proteins include the high-sulfur and high-glycine-tyrosine keratins. This Homo sapiens (Human) protein is Keratin-associated protein 21-3 (KRTAP21-3).